A 333-amino-acid chain; its full sequence is Glycerol-3-phosphate dehydrogenase [NAD(P)+] (333 aa).

NADPH is bound by residues Tyr14, His34, and Lys108. Sn-glycerol 3-phosphate-binding residues include Lys108, Gly137, and Thr139. Position 141 (Ala141) interacts with NADPH. Lys193, Asp247, Ser257, Arg258, and Asn259 together coordinate sn-glycerol 3-phosphate. The active-site Proton acceptor is the Lys193. Arg258 serves as a coordination point for NADPH. Residues Leu282 and Glu284 each contribute to the NADPH site.

It belongs to the NAD-dependent glycerol-3-phosphate dehydrogenase family.

The protein localises to the cytoplasm. The catalysed reaction is sn-glycerol 3-phosphate + NAD(+) = dihydroxyacetone phosphate + NADH + H(+). It carries out the reaction sn-glycerol 3-phosphate + NADP(+) = dihydroxyacetone phosphate + NADPH + H(+). It functions in the pathway membrane lipid metabolism; glycerophospholipid metabolism. In terms of biological role, catalyzes the reduction of the glycolytic intermediate dihydroxyacetone phosphate (DHAP) to sn-glycerol 3-phosphate (G3P), the key precursor for phospholipid synthesis. This Blochmanniella floridana protein is Glycerol-3-phosphate dehydrogenase [NAD(P)+].